Consider the following 218-residue polypeptide: Putative copper transporter crmD (218 aa).

The next 2 membrane-spanning stretches (helical) occupy residues Tyr-37 to Leu-57 and Met-176 to Val-196.

The protein belongs to the copper transporter (Ctr) (TC 1.A.56) family. SLC31A subfamily.

The protein resides in the membrane. The catalysed reaction is Cu(2+)(in) = Cu(2+)(out). Functionally, putative copper transporter; part of the crm gene cluster that mediates the biosynthesis of a yet unidentified copper-responsive metabolite. Probably involved in the transport of copper, even if it does not act as a major copper transporter. In contrast to crmA, is not involved in the biosynthesis of fumivalines or fumicicolins. The polypeptide is Putative copper transporter crmD (Aspergillus fumigatus (strain ATCC MYA-4609 / CBS 101355 / FGSC A1100 / Af293) (Neosartorya fumigata)).